We begin with the raw amino-acid sequence, 165 residues long: UPF0303 protein Bphyt_1734 (165 aa).

This sequence belongs to the UPF0303 family.

The sequence is that of UPF0303 protein Bphyt_1734 from Paraburkholderia phytofirmans (strain DSM 17436 / LMG 22146 / PsJN) (Burkholderia phytofirmans).